The following is a 108-amino-acid chain: Ribulose bisphosphate carboxylase small subunit (108 aa).

The protein belongs to the RuBisCO small chain family. In terms of assembly, heterohexadecamer of 8 large and 8 small subunits.

Functionally, ruBisCO catalyzes two reactions: the carboxylation of D-ribulose 1,5-bisphosphate, the primary event in carbon dioxide fixation, as well as the oxidative fragmentation of the pentose substrate. Both reactions occur simultaneously and in competition at the same active site. Although the small subunit is not catalytic it is essential for maximal activity. The polypeptide is Ribulose bisphosphate carboxylase small subunit (Nitrobacter vulgaris).